A 598-amino-acid polypeptide reads, in one-letter code: Beta-hexosaminidase A (598 aa).

The N-terminal stretch at 1 to 11 is a signal peptide; that stretch reads MSFITSAHATA. Aspartate 305 is a catalytic residue.

The protein belongs to the glycosyl hydrolase 3 family.

It catalyses the reaction Hydrolysis of terminal non-reducing N-acetyl-D-hexosamine residues in N-acetyl-beta-D-hexosaminides.. Its function is as follows. Most active towards p-nitrophenyl-N-acetyl-beta-D-glucosaminide(PNP-beta-GlcNAc) and diacetylchitobiose. This Pseudoalteromonas piscicida protein is Beta-hexosaminidase A (cht60).